The sequence spans 154 residues: Immunity protein YwqK (154 aa).

Probably interacts with cognate toxin YwqJ but not with other non-cognate LXG toxins. The interaction inhibits the toxic activity of YwqJ.

The protein localises to the cytoplasm. Functionally, immunity component of one of 6 LXG toxin-immunity modules in this strain. They promote kin selection, mediate competition in biofilms, and drive spatial segregation of different strains, indicating that LXG toxins may help avoid warfare between strains in biofilms. Mediates intercellular competition during biofilm formation; disruption of the operon disadvantages the bacteria, but overexpression of the cognate immunity protein restores growth in competition with wild-type. In situ neutralizes the toxic effect of cognate toxin YqcG. Probably neutralizes the ability to inhibit growth of cognate toxin YwqJ. Probably does not have immunity protein activity on other LXG toxins. This chain is Immunity protein YwqK (ywqK), found in Bacillus subtilis (strain 168).